A 117-amino-acid chain; its full sequence is Large ribosomal subunit protein uL18 (117 aa).

This sequence belongs to the universal ribosomal protein uL18 family. In terms of assembly, part of the 50S ribosomal subunit; part of the 5S rRNA/L5/L18/L25 subcomplex. Contacts the 5S and 23S rRNAs.

This is one of the proteins that bind and probably mediate the attachment of the 5S RNA into the large ribosomal subunit, where it forms part of the central protuberance. The polypeptide is Large ribosomal subunit protein uL18 (Hydrogenovibrio crunogenus (strain DSM 25203 / XCL-2) (Thiomicrospira crunogena)).